Here is a 94-residue protein sequence, read N- to C-terminus: MTKSELIERIVTHQGQLSAKDVELAIKTMLEQMSQALATGDRIEIRGFGSFSLHYRAPRVGRNPKTGESVRLDGKFVPHFKPGKELRDRVNEPE.

It belongs to the bacterial histone-like protein family. In terms of assembly, heterodimer of an alpha and a beta chain.

In terms of biological role, this protein is one of the two subunits of integration host factor, a specific DNA-binding protein that functions in genetic recombination as well as in transcriptional and translational control. The protein is Integration host factor subunit beta of Pseudomonas paraeruginosa (strain DSM 24068 / PA7) (Pseudomonas aeruginosa (strain PA7)).